The following is a 240-amino-acid chain: 6-phosphogluconolactonase (240 aa).

Belongs to the glucosamine/galactosamine-6-phosphate isomerase family. 6-phosphogluconolactonase subfamily.

It catalyses the reaction 6-phospho-D-glucono-1,5-lactone + H2O = 6-phospho-D-gluconate + H(+). Its pathway is carbohydrate degradation; pentose phosphate pathway; D-ribulose 5-phosphate from D-glucose 6-phosphate (oxidative stage): step 2/3. In terms of biological role, hydrolysis of 6-phosphogluconolactone to 6-phosphogluconate. This chain is 6-phosphogluconolactonase (pgl), found in Synechocystis sp. (strain ATCC 27184 / PCC 6803 / Kazusa).